A 238-amino-acid chain; its full sequence is Ubiquinone biosynthesis O-methyltransferase (238 aa).

Positions 40, 59, 80, and 125 each coordinate S-adenosyl-L-methionine.

This sequence belongs to the methyltransferase superfamily. UbiG/COQ3 family.

It catalyses the reaction a 3-demethylubiquinol + S-adenosyl-L-methionine = a ubiquinol + S-adenosyl-L-homocysteine + H(+). It carries out the reaction a 3-(all-trans-polyprenyl)benzene-1,2-diol + S-adenosyl-L-methionine = a 2-methoxy-6-(all-trans-polyprenyl)phenol + S-adenosyl-L-homocysteine + H(+). It functions in the pathway cofactor biosynthesis; ubiquinone biosynthesis. Its function is as follows. O-methyltransferase that catalyzes the 2 O-methylation steps in the ubiquinone biosynthetic pathway. This Paracidovorax citrulli (strain AAC00-1) (Acidovorax citrulli) protein is Ubiquinone biosynthesis O-methyltransferase.